The chain runs to 54 residues: Ovomucoid (54 aa).

The region spanning 4–54 is the Kazal-like domain; that stretch reads VDCSDYPKPACRMEYMPLCGSDNKTYGNKCNFCNAVVDSNGTLTLSHFGKC. 3 cysteine pairs are disulfide-bonded: C6–C36, C14–C33, and C22–C54. An N-linked (GlcNAc...) asparagine glycan is attached at N43.

The protein resides in the secreted. This is Ovomucoid from Cereopsis novaehollandiae (Cape Barren goose).